Reading from the N-terminus, the 626-residue chain is Myelin-associated glycoprotein (626 aa).

An N-terminal signal peptide occupies residues 1–19 (MIFLTALPLFWIMISASRG). The interaction with RTN4R and RTN4RL2 stretch occupies residues 20-325 (GHWGAWMPSS…RTVGLSVMYA (306 aa)). The Extracellular portion of the chain corresponds to 20–516 (GHWGAWMPSS…HRLMWAKIGP (497 aa)). The 99-residue stretch at 22–120 (WGAWMPSSIS…LGGKYYFRGD (99 aa)) folds into the Ig-like V-type domain. 3 disulfide bridges follow: Cys37–Cys165, Cys42–Cys100, and Cys159–Cys217. Residue 65–67 (YPK) coordinates a ganglioside GT1b (d18:1(4E)). A glycan (N-linked (GlcNAc...) asparagine) is linked at Asn99. A glycan (N-linked (GlcNAc...) asparagine; partial) is linked at Asn106. A ganglioside GT1b (d18:1(4E)) contacts are provided by residues Arg118 and 124-128 (YNQYT). Ig-like C2-type domains follow at residues 139–237 (NTPN…MDVK), 241–325 (VIVE…VMYA), 327–412 (WKPT…VEFA), and 413–508 (PVLL…GAHR). Residues Asn223 and Asn246 are each glycosylated (N-linked (GlcNAc...) asparagine). A disulfide bond links Cys261 and Cys305. The N-linked (GlcNAc...) asparagine glycan is linked to Asn315. A disulfide bridge links Cys347 with Cys392. N-linked (GlcNAc...) asparagine glycosylation occurs at Asn406. Disulfide bonds link Cys421-Cys430 and Cys432-Cys488. N-linked (GlcNAc...) asparagine glycosylation is found at Asn450 and Asn454. A helical membrane pass occupies residues 517–536 (VGAVVAFAILIAIVCYITQT). Cys531 carries S-palmitoyl cysteine lipidation. At 537–626 (RRKKNVTESP…LAEYAEIRVK (90 aa)) the chain is on the cytoplasmic side. Residues Ser545, Ser547, and Ser549 each carry the phosphoserine modification. The tract at residues 577-626 (LGSERRLLGLRGEPPELDLSYSHSDLGKRPTKDSYTLTEELAEYAEIRVK) is required for normal axon myelination in the central nervous system. The interval 582-608 (RLLGLRGEPPELDLSYSHSDLGKRPTK) is disordered.

Belongs to the immunoglobulin superfamily. SIGLEC (sialic acid binding Ig-like lectin) family. Monomer and homodimer. Interacts (via the first three N-terminal Ig-like domains) with RTN4R and RTN4RL2. Interacts with RTN4R. Interacts with isoform 2 of BSG. N-glycosylated. In terms of processing, phosphorylated on tyrosine residues. Post-translationally, ubiquitinated, leading to proteasomal degradation. Both isoform 1 and isoform 2 are detected in myelinated structures in the central and peripheral nervous system, in periaxonal myelin and at Schmidt-Lanterman incisures. Detected in optic nerve, in oligodendroglia and in periaxonal myelin sheaths. Detected in compact myelin (at protein level). Both isoform 1 and isoform 2 are detected in the central and peripheral nervous system.

Its subcellular location is the cell membrane. The protein localises to the membrane raft. Its function is as follows. Adhesion molecule that mediates interactions between myelinating cells and neurons by binding to neuronal sialic acid-containing gangliosides and to the glycoproteins RTN4R and RTN4RL2. Not required for initial myelination, but seems to play a role in the maintenance of normal axon myelination. Protects motoneurons against apoptosis, also after injury; protection against apoptosis is probably mediated via interaction with neuronal RTN4R and RTN4RL2. Required to prevent degeneration of myelinated axons in adults; this probably depends on binding to gangliosides on the axon cell membrane. Negative regulator of neurite outgrowth; in dorsal root ganglion neurons the inhibition is mediated primarily via binding to neuronal RTN4R or RTN4RL2 and to a lesser degree via binding to neuronal gangliosides. In cerebellar granule cells the inhibition is mediated primarily via binding to neuronal gangliosides. In sensory neurons, inhibition of neurite extension depends only partially on RTN4R, RTN4RL2 and gangliosides. Inhibits axon longitudinal growth. Inhibits axon outgrowth by binding to RTN4R. Preferentially binds to alpha-2,3-linked sialic acid. Binds ganglioside Gt1b. This chain is Myelin-associated glycoprotein (MAG), found in Homo sapiens (Human).